The primary structure comprises 115 residues: Procyclic form-specific polypeptide (115 aa).

The signal sequence occupies residues 1–27 (MAPRSLYLLAVLLFSANLFAGVGFAAA). The interval 27 to 97 (AAEGPEDKGL…PEPEPGAATL (71 aa)) is disordered. Basic and acidic residues predominate over residues 31–52 (PEDKGLTKGGKGKGEKGTKVGA). N56 is a glycosylation site (N-linked (GlcNAc...) asparagine). A run of 17 repeats spans residues 59–60 (DP), 61–62 (DP), 63–64 (EP), 65–66 (EP), 67–68 (EP), 69–70 (EP), 71–72 (EP), 73–74 (EP), 75–76 (EP), 77–78 (EP), 79–80 (EP), 81–82 (EP), 83–84 (EP), 85–86 (EP), 87–88 (EP), 89–90 (EP), and 91–92 (EP). A 17 X 2 AA tandem repeats of [DE]-P region spans residues 59-92 (DPDPEPEPEPEPEPEPEPEPEPEPEPEPEPEPEP). A compositionally biased stretch (acidic residues) spans 60-90 (PDPEPEPEPEPEPEPEPEPEPEPEPEPEPEP). G93 carries the GPI-anchor amidated glycine lipid modification. The propeptide at 94–115 (AATLKSVALPFAIAAAALVAAF) is removed in mature form.

Its subcellular location is the cell membrane. In terms of biological role, major surface antigen of procyclic forms. This chain is Procyclic form-specific polypeptide (PROA), found in Trypanosoma brucei brucei.